A 314-amino-acid chain; its full sequence is 4-diphosphocytidyl-2-C-methyl-D-erythritol kinase (314 aa).

K11 is an active-site residue. ATP is bound at residue 99–109 (PMAAGLAGGST). D141 is a catalytic residue.

Belongs to the GHMP kinase family. IspE subfamily.

It catalyses the reaction 4-CDP-2-C-methyl-D-erythritol + ATP = 4-CDP-2-C-methyl-D-erythritol 2-phosphate + ADP + H(+). It functions in the pathway isoprenoid biosynthesis; isopentenyl diphosphate biosynthesis via DXP pathway; isopentenyl diphosphate from 1-deoxy-D-xylulose 5-phosphate: step 3/6. In terms of biological role, catalyzes the phosphorylation of the position 2 hydroxy group of 4-diphosphocytidyl-2C-methyl-D-erythritol. This Trichodesmium erythraeum (strain IMS101) protein is 4-diphosphocytidyl-2-C-methyl-D-erythritol kinase.